Reading from the N-terminus, the 504-residue chain is Histidine ammonia-lyase (504 aa).

A cross-link (5-imidazolinone (Ala-Gly)) is located at residues 142 to 144 (ASG). Ser143 carries the post-translational modification 2,3-didehydroalanine (Ser).

Belongs to the PAL/histidase family. Contains an active site 4-methylidene-imidazol-5-one (MIO), which is formed autocatalytically by cyclization and dehydration of residues Ala-Ser-Gly.

It is found in the cytoplasm. It catalyses the reaction L-histidine = trans-urocanate + NH4(+). It participates in amino-acid degradation; L-histidine degradation into L-glutamate; N-formimidoyl-L-glutamate from L-histidine: step 1/3. In Staphylococcus aureus (strain MSSA476), this protein is Histidine ammonia-lyase.